Consider the following 707-residue polypeptide: Solute carrier family 15 member 1 (707 aa).

The helical transmembrane segment at 1 to 21 threads the bilayer; it reads MGMSKSLSCFGYPLSIFFIVV. Topologically, residues 22-53 are extracellular; sequence NEFCERFSYYGMRALLILYFRNFIGWDDNLST. N-linked (GlcNAc...) asparagine glycosylation occurs at asparagine 50. The chain crosses the membrane as a helical span at residues 54–74; it reads VIYHTFVALCYLTPILGALIA. Residues 75 to 82 lie on the Cytoplasmic side of the membrane; it reads DAWLGKFK. The helical transmembrane segment at 83–103 threads the bilayer; sequence TIVWLSIVYTIGQAVTSLSSV. Over 104–118 the chain is Extracellular; it reads NELTDNNHDGTPDSL. The helical transmembrane segment at 119-139 threads the bilayer; it reads PVHVAVCMIGLLLIALGTGGI. Topologically, residues 140–161 are cytoplasmic; that stretch reads KPCVSAFGGDQFEEGQEKQRNR. The chain crosses the membrane as a helical span at residues 162-182; sequence FFSIFYLAINAGSLLSTIITP. Residues 183–198 are Extracellular-facing; sequence MVRVQQCGIHVKQACY. The helical transmembrane segment at 199 to 219 threads the bilayer; sequence PLAFGIPAILMAVSLIVFIIG. At 220–276 the chain is on the cytoplasmic side; sequence SGMYKKFKPQGNILSKVVKCICFAIKNRFRHRSKQFPKRAHWLDWAKEKYDERLIAQ. The chain crosses the membrane as a helical span at residues 277 to 297; that stretch reads IKMVTRVLFLYIPLPMFWALF. Topologically, residues 298–327 are extracellular; that stretch reads DQQGSRWTLQATTMSGRIGILEIQPDQMQT. The helical transmembrane segment at 328–348 threads the bilayer; the sequence is VNTILIIILVPIMDAVVYPLI. The Cytoplasmic segment spans residues 349 to 361; sequence AKCGLNFTSLKKM. A helical transmembrane segment spans residues 362–382; that stretch reads TIGMFLASMAFVAAAILQVEI. Residues 383–583 are Extracellular-facing; the sequence is DKTLPVFPKA…PPNTMNMAWQ (201 aa). The extracellular domain (ECD) stretch occupies residues 383–583; sequence DKTLPVFPKA…PPNTMNMAWQ (201 aa). N-linked (GlcNAc...) asparagine glycosylation is found at asparagine 439, asparagine 498, and asparagine 513. Residues 584 to 604 traverse the membrane as a helical segment; that stretch reads IPQYFLITSGEVVFSITGLEF. Topologically, residues 605–618 are cytoplasmic; the sequence is SYSQAPSNMKSVLQ. A helical transmembrane segment spans residues 619–639; that stretch reads AGWLLTVAVGNIIVLIVAGAG. Residues 640 to 644 are Extracellular-facing; the sequence is QINKQ. A helical transmembrane segment spans residues 645-665; sequence WAEYILFAALLLVVCVIFAIM. The Cytoplasmic segment spans residues 666 to 707; it reads ARFYTYVNPAEIEAQFEEDEKKKNPEKNDLYPSLAPVSQTQM. Residues 682–707 form a disordered region; the sequence is EEDEKKKNPEKNDLYPSLAPVSQTQM. Residues 684–694 show a composition bias toward basic and acidic residues; it reads DEKKKNPEKND.

This sequence belongs to the major facilitator superfamily. Proton-dependent oligopeptide transporter (POT/PTR) (TC 2.A.17) family. As to quaternary structure, interacts (via extracellular domain region) with trypsin. As to expression, intestine, kidney, liver and low in brain.

It is found in the apical cell membrane. It carries out the reaction a dipeptide(out) + H(+)(out) = a dipeptide(in) + H(+)(in). The enzyme catalyses an L-amino acid tripeptide(out) + H(+)(out) = an L-amino acid tripeptide(in) + H(+)(in). The catalysed reaction is L-alanyl-L-lysine(out) + H(+)(out) = L-alanyl-L-lysine(in) + H(+)(in). It catalyses the reaction L-alanyl-L-proline(out) + H(+)(out) = L-alanyl-L-proline(in) + H(+)(in). It carries out the reaction L-alanyl-L-valine(out) + H(+)(out) = L-alanyl-L-valine(in) + H(+)(in). The enzyme catalyses carnosine(out) + H(+)(out) = carnosine(in) + H(+)(in). The catalysed reaction is glycyl-L-glutamine(out) + H(+)(out) = glycyl-L-glutamine(in) + H(+)(in). It catalyses the reaction glycyl-L-leucine(out) + H(+)(out) = glycyl-L-leucine(in) + H(+)(in). It carries out the reaction glycyl-L-proline(out) + H(+)(out) = glycyl-L-proline(in) + H(+)(in). The enzyme catalyses glycyl-sarcosine(out) + H(+)(out) = glycyl-sarcosine(in) + H(+)(in). The catalysed reaction is L-leucyl-L-leucine(out) + H(+)(out) = L-leucyl-L-leucine(in) + H(+)(in). It catalyses the reaction L-leucyl-L-proline(out) + H(+)(out) = L-leucyl-L-proline(in) + H(+)(in). It carries out the reaction L-phenylalanyl-L-leucine(out) + H(+)(out) = L-phenylalanyl-L-leucine(in) + H(+)(in). The enzyme catalyses L-phenylalanyl-L-phenylalanine(out) + H(+)(out) = L-phenylalanyl-L-phenylalanine(in) + H(+)(in). The catalysed reaction is L-lysyl-glycine(out) + H(+)(out) = L-lysyl-glycine(in) + H(+)(in). It catalyses the reaction L-tyrosylglycine(out) + H(+)(out) = L-tyrosylglycine(in) + H(+)(in). It carries out the reaction L-alanyl-L-aspartate(out) + 2 H(+)(out) = L-alanyl-L-aspartate(in) + 2 H(+)(in). The enzyme catalyses L-aspartyl-glycine(out) + 2 H(+)(out) = L-aspartyl-glycine(in) + 2 H(+)(in). The catalysed reaction is glycyl-L-aspartate(out) + 2 H(+)(out) = glycyl-L-aspartate(in) + 2 H(+)(in). It catalyses the reaction glycyl-L-glutamate(out) + 2 H(+)(out) = glycyl-L-glutamate(in) + 2 H(+)(in). It carries out the reaction L-alanyl-L-leucyl-L-alanine(out) + H(+)(out) = L-alanyl-L-leucyl-L-alanine(in) + H(+)(in). The enzyme catalyses L-alanyl-L-prolylglycine(out) + H(+)(out) = L-alanyl-L-prolylglycine(in) + H(+)(in). The catalysed reaction is glycylglycyl-L-isoleucine(out) + H(+)(out) = glycylglycyl-L-isoleucine(in) + H(+)(in). It catalyses the reaction glycylglycyl-L-proline(out) + H(+)(out) = glycylglycyl-L-proline(in) + H(+)(in). It carries out the reaction L-methionyl-L-phenylalanyl-L-methionine(out) + H(+)(out) = L-methionyl-L-phenylalanyl-L-methionine(in) + H(+)(in). The enzyme catalyses N-acetyl-D-muramoyl-L-alanyl-D-isoglutamine(out) + 2 H(+)(out) = N-acetyl-D-muramoyl-L-alanyl-D-isoglutamine(in) + 2 H(+)(in). The catalysed reaction is N(alpha)-formyl-L-methionyl-L-leucyl-L-phenylalanine(out) + 2 H(+)(out) = N(alpha)-formyl-L-methionyl-L-leucyl-L-phenylalanine(in) + 2 H(+)(in). Electrogenic proton-coupled amino-acid transporter that transports oligopeptides of 2 to 4 amino acids with a preference for dipeptides. Transports neutral and monovalently charged peptides with a proton to peptide stoichiometry of 1:1 or 2:1. Primarily responsible for the absorption of dietary di- and tripeptides from the small intestinal lumen. Mediates transepithelial transport of muramyl and N-formylated bacterial dipeptides contributing to recognition of pathogenic bacteria by the mucosal immune system. The sequence is that of Solute carrier family 15 member 1 (SLC15A1) from Oryctolagus cuniculus (Rabbit).